A 571-amino-acid polypeptide reads, in one-letter code: Glycine--tRNA ligase (571 aa).

Substrate is bound by residues R99 and E165. ATP is bound by residues 197–199 (RNE), 207–212 (IRLREF), 324–325 (EC), and 443–446 (GIDR). Residue 212–216 (FTQAE) coordinates substrate. 439–443 (EPSFG) serves as a coordination point for substrate.

Belongs to the class-II aminoacyl-tRNA synthetase family.

The protein resides in the cytoplasm. It catalyses the reaction tRNA(Gly) + glycine + ATP = glycyl-tRNA(Gly) + AMP + diphosphate. Catalyzes the attachment of glycine to tRNA(Gly). The protein is Glycine--tRNA ligase of Pyrococcus abyssi (strain GE5 / Orsay).